Reading from the N-terminus, the 307-residue chain is Protein pid-3 (307 aa).

In terms of assembly, component of the pid-1 variant of the PETISCO complex (also called the pid-3, erh-2, tofu-6, and ife-3 small RNA complex) containing at least pid-1, tofu-6, ife-3, pid-3, and erh-2, which is required for the biogenesis of a class of 21 nucleotide PIWI-interacting RNAs (piRNAs) that possess a uracil residue at the 5'-end (also called 21U-RNAs). Within the complex interacts with pid-1; the interaction is direct. Component of the tost-1 variant of the PETISCO complex (also called the pid-3, erh-2, tofu-6, and ife-3 small RNA complex) containing at least tost-1, tofu-6, ife-3, pid-3, and erh-2, which plays an essential role in embryogenesis. Within the complex interacts with tost-1. Within the pid-1 and tost-1 variants of the PETISCO complexes interacts with tofu-6 (via the RRM domain) and erh-2. In contrast to the pid-1 variant of the PETISCO complex, the tost-1 variant of the PETISCO complex plays a minor role in the biogenesis of 21U-RNAs. In terms of tissue distribution, expressed in the germline (at protein level).

Its subcellular location is the cytoplasm. The protein localises to the perinuclear region. It is found in the nucleus. Component of the pid-1 and tost-1 variants of the PETISCO complexes, which have roles in the biogenesis of a class of 21 nucleotide PIWI-interacting RNAs (piRNAs) that possess a uracil residue at the 5'-end (also called 21U-RNAs) and embryogenesis, respectively. Within the pid-1 variant of the PETISCO complex may stabilize 21U-RNA precursor molecules. Promotes the biogenesis of 21U-RNAs. Required for chromosome segregation and cell division in early embryos. The polypeptide is Protein pid-3 (Caenorhabditis elegans).